Here is a 457-residue protein sequence, read N- to C-terminus: Chromosomal replication initiator protein DnaA (457 aa).

The segment at 1–81 is domain I, interacts with DnaA modulators; sequence MERDLSQLWQ…NNTDLVIKVQ (81 aa). The tract at residues 81–119 is domain II; the sequence is QEGSKPAARKVVAQQEIANTPVQHSAPMPENEPQAAFRS. Residues 120-337 form a domain III, AAA+ region region; it reads NLNQHHLFEN…GALNRVHANA (218 aa). 4 residues coordinate ATP: Gly-165, Gly-167, Lys-168, and Thr-169. The domain IV, binds dsDNA stretch occupies residues 338–457; that stretch reads DFTGKAITID…WSNLIRTLSA (120 aa).

Belongs to the DnaA family. As to quaternary structure, oligomerizes as a right-handed, spiral filament on DNA at oriC.

The protein resides in the cytoplasm. Plays an essential role in the initiation and regulation of chromosomal replication. ATP-DnaA binds to the origin of replication (oriC) to initiate formation of the DNA replication initiation complex once per cell cycle. Binds the DnaA box (a 9 base pair repeat at the origin) and separates the double-stranded (ds)DNA. Forms a right-handed helical filament on oriC DNA; dsDNA binds to the exterior of the filament while single-stranded (ss)DNA is stabiized in the filament's interior. The ATP-DnaA-oriC complex binds and stabilizes one strand of the AT-rich DNA unwinding element (DUE), permitting loading of DNA polymerase. After initiation quickly degrades to an ADP-DnaA complex that is not apt for DNA replication. Binds acidic phospholipids. The protein is Chromosomal replication initiator protein DnaA of Mannheimia succiniciproducens (strain KCTC 0769BP / MBEL55E).